A 348-amino-acid chain; its full sequence is Dihydroorotase (348 aa).

Zn(2+) is bound by residues His13 and His15. Substrate is bound by residues 15 to 17 (HLR) and Asn41. Zn(2+)-binding residues include Lys99, His136, and His174. Lys99 is subject to N6-carboxylysine. Substrate is bound at residue His136. A substrate-binding site is contributed by Leu219. Asp247 is a binding site for Zn(2+). The active site involves Asp247. Substrate contacts are provided by His251 and Ala263.

Belongs to the metallo-dependent hydrolases superfamily. DHOase family. Class II DHOase subfamily. In terms of assembly, homodimer. Zn(2+) is required as a cofactor.

The enzyme catalyses (S)-dihydroorotate + H2O = N-carbamoyl-L-aspartate + H(+). The protein operates within pyrimidine metabolism; UMP biosynthesis via de novo pathway; (S)-dihydroorotate from bicarbonate: step 3/3. Functionally, catalyzes the reversible cyclization of carbamoyl aspartate to dihydroorotate. The sequence is that of Dihydroorotase from Coxiella burnetii (strain RSA 331 / Henzerling II).